The following is a 139-amino-acid chain: Glutamate mutase sigma subunit (139 aa).

The B12-binding domain maps to 4-139; that stretch reads KIKLVLGVIG…DLHADFPDHA (136 aa). Adenosylcob(III)alamin contacts are provided by residues 14–18, His17, 62–64, and 94–98; these read SDCHA, SSL, and NIVVG.

It belongs to the methylaspartate mutase GlmS subunit family. In terms of assembly, heterotetramer composed of 2 epsilon subunits (GlmE) and 2 sigma subunits (GlmS). GlmE exists as a homodimer and GlmS as a monomer. It depends on adenosylcob(III)alamin as a cofactor.

It catalyses the reaction (2S,3S)-3-methyl-L-aspartate = L-glutamate. It functions in the pathway amino-acid degradation; L-glutamate degradation via mesaconate pathway; acetate and pyruvate from L-glutamate: step 1/4. Its function is as follows. Catalyzes the carbon skeleton rearrangement of L-glutamate to L-threo-3-methylaspartate ((2S,3S)-3-methylaspartate). The polypeptide is Glutamate mutase sigma subunit (Treponema denticola (strain ATCC 35405 / DSM 14222 / CIP 103919 / JCM 8153 / KCTC 15104)).